We begin with the raw amino-acid sequence, 148 residues long: Putative pre-16S rRNA nuclease (148 aa).

Belongs to the YqgF nuclease family.

The protein resides in the cytoplasm. Its function is as follows. Could be a nuclease involved in processing of the 5'-end of pre-16S rRNA. This Chlamydia muridarum (strain MoPn / Nigg) protein is Putative pre-16S rRNA nuclease.